Reading from the N-terminus, the 110-residue chain is Large ribosomal subunit protein uL22 (110 aa).

It belongs to the universal ribosomal protein uL22 family. In terms of assembly, part of the 50S ribosomal subunit.

Its function is as follows. This protein binds specifically to 23S rRNA; its binding is stimulated by other ribosomal proteins, e.g. L4, L17, and L20. It is important during the early stages of 50S assembly. It makes multiple contacts with different domains of the 23S rRNA in the assembled 50S subunit and ribosome. Functionally, the globular domain of the protein is located near the polypeptide exit tunnel on the outside of the subunit, while an extended beta-hairpin is found that lines the wall of the exit tunnel in the center of the 70S ribosome. In Methylococcus capsulatus (strain ATCC 33009 / NCIMB 11132 / Bath), this protein is Large ribosomal subunit protein uL22.